The following is a 447-amino-acid chain: Argininosuccinate synthase (447 aa).

ATP contacts are provided by residues 17-25 and Ala-43; that span reads AFSGGLDTS. Residue Tyr-99 coordinates L-citrulline. Residues Gly-129 and Thr-131 each contribute to the ATP site. Positions 131, 135, and 136 each coordinate L-aspartate. Asn-135 is an L-citrulline binding site. Position 136 (Asp-136) interacts with ATP. L-citrulline-binding residues include Arg-139 and Ser-192. Asp-194 is a binding site for ATP. Residues Thr-201, Glu-203, and Glu-280 each coordinate L-citrulline.

It belongs to the argininosuccinate synthase family. Type 2 subfamily. In terms of assembly, homotetramer.

It localises to the cytoplasm. The enzyme catalyses L-citrulline + L-aspartate + ATP = 2-(N(omega)-L-arginino)succinate + AMP + diphosphate + H(+). Its pathway is amino-acid biosynthesis; L-arginine biosynthesis; L-arginine from L-ornithine and carbamoyl phosphate: step 2/3. The chain is Argininosuccinate synthase from Shigella dysenteriae serotype 1 (strain Sd197).